A 231-amino-acid polypeptide reads, in one-letter code: Claudin-10 (231 aa).

Residues 1 to 21 (MASTALEIVAFVVSISGWVLV) form a helical membrane-spanning segment. Residues 22–80 (SSTLPTDYWKVSTIDGTVITTATYFANLWKICVTDSTGVANCKEFPSMLALDGYIQACR) lie on the Extracellular side of the membrane. The helical transmembrane segment at 81 to 101 (GLMIAAVSLGFFGSIFALFGM) threads the bilayer. The Cytoplasmic segment spans residues 102–115 (KCTKVGGSDQAKAK). A helical membrane pass occupies residues 116–136 (IACLAGIVFILSGLCSMTGCS). Residues 137–160 (LYANKITTEFFDPLYMEQKYELGA) are Extracellular-facing. The helical transmembrane segment at 161–181 (ALFIGWAGASLCIIGGVIFCF) threads the bilayer. Over 182 to 231 (SISDNNKTPRMGYTYNGPTSAMSSRTKYQGGEGDFKTTGPSKQFDKNAYV) the chain is Cytoplasmic.

Belongs to the claudin family. As to quaternary structure, can form homodimers both in trans (interaction between CLDN10 molecules in opposing membranes) and in cis (interaction between CLDN10 molecules within one membrane). Interacts with CLDN19. In terms of tissue distribution, widely expressed, with highest expression detected in brain cortex, kidney and lung. In kidney, the expression is highest in medulla, with transcripts being detected in medullary thick ascending limb of Henle's loop (mTAL) and outer and inner medullary collecting ducts. Expressed in salivary glands and skin. Detected in kidney with transcripts being detected in PCT, mTAL and cortical collecting duct. Detected in uterus. Expressed in proximal tubules (at protein level). As to expression, only detected in kidney and uterus. In terms of tissue distribution, detected in kidney with transcripts being detected in PCT, mTAL and cortical collecting duct. Detected in uterus. Expressed in the inner ear where it is detected in organ of Corti, marginal cells of stria vascularis, Reissner's membrane and spiral limbus (at protein level).

The protein localises to the cell junction. It localises to the tight junction. Its subcellular location is the cell membrane. It is found in the endoplasmic reticulum. It catalyses the reaction Na(+)(in) = Na(+)(out). The catalysed reaction is Li(+)(in) = Li(+)(out). It carries out the reaction K(+)(in) = K(+)(out). The enzyme catalyses Rb(+)(in) = Rb(+)(out). It catalyses the reaction Cs(+)(in) = Cs(+)(out). The catalysed reaction is NH4(+)(in) = NH4(+)(out). It carries out the reaction methylamine(out) = methylamine(in). The enzyme catalyses Mg(2+)(in) = Mg(2+)(out). It catalyses the reaction Ca(2+)(in) = Ca(2+)(out). The catalysed reaction is Sr(2+)(in) = Sr(2+)(out). It carries out the reaction chloride(in) = chloride(out). The enzyme catalyses nitrate(in) = nitrate(out). Functionally, forms paracellular channels: polymerizes in tight junction strands with cation- and anion-selective channels through the strands, conveying epithelial permeability in a process known as paracellular tight junction permeability. Its function is as follows. Forms cation-selective paracellular channels. In sweat glands and in the thick ascending limb (TAL) of Henle's loop in kidney, it controls paracellular sodium permeability which is essential for proper sweat production and renal function. In terms of biological role, forms anion-selective paracellular channels. In renal proximal tubules, it conveys selective chloride over hydrogencarbonate anion permeability which is required for renal chloride reabsorption and salt homeostasis. This chain is Claudin-10, found in Mus musculus (Mouse).